Consider the following 134-residue polypeptide: uncharacterized protein (134 aa).

Residues 13–35 (FFIAFSAYLVVILLMTAVSVYYL) traverse the membrane as a helical segment.

Its subcellular location is the membrane. This is an uncharacterized protein from Archaeoglobus fulgidus (strain ATCC 49558 / DSM 4304 / JCM 9628 / NBRC 100126 / VC-16).